A 157-amino-acid polypeptide reads, in one-letter code: MVRNIMAKEFSRTRRIAQQLQQELAQVLQRDMKDPRIGFVTVNDVDVSRDLSYAKVFVTFFEEDKAVVQEKLNALISAAPYIRTLVAGRMKLRVMPELRFIYDSSLVEGMRMSNLVSQVINQDKAKQQQFGSEDASVEDEVLGDDVADDADETEGKD.

The disordered stretch occupies residues glutamine 127–aspartate 157. The span at alanine 135 to aspartate 157 shows a compositional bias: acidic residues.

It belongs to the RbfA family. Monomer. Binds 30S ribosomal subunits, but not 50S ribosomal subunits or 70S ribosomes.

The protein localises to the cytoplasm. One of several proteins that assist in the late maturation steps of the functional core of the 30S ribosomal subunit. Associates with free 30S ribosomal subunits (but not with 30S subunits that are part of 70S ribosomes or polysomes). Required for efficient processing of 16S rRNA. May interact with the 5'-terminal helix region of 16S rRNA. The sequence is that of Ribosome-binding factor A from Shewanella baltica (strain OS155 / ATCC BAA-1091).